Reading from the N-terminus, the 140-residue chain is Putative nickel-responsive regulator 2 (140 aa).

Residues histidine 81, histidine 92, histidine 94, and cysteine 100 each coordinate Ni(2+).

Belongs to the transcriptional regulatory CopG/NikR family. Ni(2+) is required as a cofactor.

Transcriptional regulator. The chain is Putative nickel-responsive regulator 2 from Methanosarcina acetivorans (strain ATCC 35395 / DSM 2834 / JCM 12185 / C2A).